Consider the following 206-residue polypeptide: Large ribosomal subunit protein uL4 (206 aa).

Residues 46 to 95 (GNRAQKTRAEVKHSTKKPWRQKGTGRARSGMTSSPLWRKGGRAFPNKPDE) are disordered. Basic residues predominate over residues 59-70 (STKKPWRQKGTG).

The protein belongs to the universal ribosomal protein uL4 family. As to quaternary structure, part of the 50S ribosomal subunit.

Its function is as follows. One of the primary rRNA binding proteins, this protein initially binds near the 5'-end of the 23S rRNA. It is important during the early stages of 50S assembly. It makes multiple contacts with different domains of the 23S rRNA in the assembled 50S subunit and ribosome. Forms part of the polypeptide exit tunnel. This Neisseria meningitidis serogroup C (strain 053442) protein is Large ribosomal subunit protein uL4.